A 328-amino-acid polypeptide reads, in one-letter code: Ribose-phosphate pyrophosphokinase (328 aa).

ATP is bound by residues 39–41 (DGE) and 98–99 (RQ). Residues H132 and D172 each coordinate Mg(2+). K195 is an active-site residue. D-ribose 5-phosphate is bound by residues R197, D221, and 225 to 229 (DTGGT).

The protein belongs to the ribose-phosphate pyrophosphokinase family. Class I subfamily. As to quaternary structure, homohexamer. Mg(2+) serves as cofactor.

The protein resides in the cytoplasm. It catalyses the reaction D-ribose 5-phosphate + ATP = 5-phospho-alpha-D-ribose 1-diphosphate + AMP + H(+). It participates in metabolic intermediate biosynthesis; 5-phospho-alpha-D-ribose 1-diphosphate biosynthesis; 5-phospho-alpha-D-ribose 1-diphosphate from D-ribose 5-phosphate (route I): step 1/1. Functionally, involved in the biosynthesis of the central metabolite phospho-alpha-D-ribosyl-1-pyrophosphate (PRPP) via the transfer of pyrophosphoryl group from ATP to 1-hydroxyl of ribose-5-phosphate (Rib-5-P). The polypeptide is Ribose-phosphate pyrophosphokinase (Mycoplasma pneumoniae (strain ATCC 29342 / M129 / Subtype 1) (Mycoplasmoides pneumoniae)).